We begin with the raw amino-acid sequence, 424 residues long: Enolase (424 aa).

Gln162 is a (2R)-2-phosphoglycerate binding site. Glu204 serves as the catalytic Proton donor. 3 residues coordinate Mg(2+): Asp241, Glu284, and Asp311. (2R)-2-phosphoglycerate is bound by residues Lys336, Arg365, Ser366, and Lys387. The active-site Proton acceptor is Lys336.

The protein belongs to the enolase family. Requires Mg(2+) as cofactor.

The protein localises to the cytoplasm. It localises to the secreted. It is found in the cell surface. It carries out the reaction (2R)-2-phosphoglycerate = phosphoenolpyruvate + H2O. Its pathway is carbohydrate degradation; glycolysis; pyruvate from D-glyceraldehyde 3-phosphate: step 4/5. Its function is as follows. Catalyzes the reversible conversion of 2-phosphoglycerate (2-PG) into phosphoenolpyruvate (PEP). It is essential for the degradation of carbohydrates via glycolysis. The protein is Enolase of Chelativorans sp. (strain BNC1).